The sequence spans 105 residues: UPF0166 protein aq_450 (105 aa).

Belongs to the UPF0166 family.

In Aquifex aeolicus (strain VF5), this protein is UPF0166 protein aq_450.